We begin with the raw amino-acid sequence, 421 residues long: Histidine--tRNA ligase (421 aa).

Belongs to the class-II aminoacyl-tRNA synthetase family. Homodimer.

It is found in the cytoplasm. It carries out the reaction tRNA(His) + L-histidine + ATP = L-histidyl-tRNA(His) + AMP + diphosphate + H(+). This chain is Histidine--tRNA ligase, found in Solidesulfovibrio magneticus (strain ATCC 700980 / DSM 13731 / RS-1) (Desulfovibrio magneticus).